Here is a 588-residue protein sequence, read N- to C-terminus: Transcription factor tau 60 kDa subunit (588 aa).

A sufficient for SPT15-binding region spans residues 399–588; that stretch reads LPKLPENFSM…VYCGTTLEVM (190 aa).

As to quaternary structure, heterodimer with TFC6. Component of the TFIIIC complex composed of TFC1, TFC3, TFC4, TFC6, TFC7 and TFC8. The subunits are organized in two globular domains, tauA and tauB, connected by a proteolysis-sensitive and flexible linker. Interacts with SPT15 and directly with TFC6.

It localises to the nucleus. TFIIIC mediates tRNA and 5S RNA gene activation by binding to intragenic promoter elements. Upstream of the transcription start site, TFIIIC assembles the initiation complex TFIIIB-TFIIIC-tDNA, which is sufficient for RNA polymerase III recruitment and function. Part of the tauB domain of TFIIIC that binds boxB DNA promoter sites of tRNA and similar genes. Plays a role in TFIIB assembly through its interaction with SPT15/TBP. Essential for cell viability. The polypeptide is Transcription factor tau 60 kDa subunit (TFC8) (Saccharomyces cerevisiae (strain ATCC 204508 / S288c) (Baker's yeast)).